A 942-amino-acid polypeptide reads, in one-letter code: Isoleucine--tRNA ligase (942 aa).

The 'HIGH' region motif lies at 58 to 68 (PYVNGSIHLGH). Glu564 contributes to the L-isoleucyl-5'-AMP binding site. Residues 605 to 609 (KMSKS) carry the 'KMSKS' region motif. Lys608 lines the ATP pocket. Zn(2+)-binding residues include Cys905, Cys908, Cys925, and Cys928.

This sequence belongs to the class-I aminoacyl-tRNA synthetase family. IleS type 1 subfamily. As to quaternary structure, monomer. The cofactor is Zn(2+).

Its subcellular location is the cytoplasm. It catalyses the reaction tRNA(Ile) + L-isoleucine + ATP = L-isoleucyl-tRNA(Ile) + AMP + diphosphate. In terms of biological role, catalyzes the attachment of isoleucine to tRNA(Ile). As IleRS can inadvertently accommodate and process structurally similar amino acids such as valine, to avoid such errors it has two additional distinct tRNA(Ile)-dependent editing activities. One activity is designated as 'pretransfer' editing and involves the hydrolysis of activated Val-AMP. The other activity is designated 'posttransfer' editing and involves deacylation of mischarged Val-tRNA(Ile). The sequence is that of Isoleucine--tRNA ligase from Blochmanniella pennsylvanica (strain BPEN).